Here is a 349-residue protein sequence, read N- to C-terminus: D-alanine--D-alanine ligase (349 aa).

Residues 132–335 (KHVFEAVGVP…YSDLIEKLVD (204 aa)) form the ATP-grasp domain. Residue 162–217 (VEKLEFPVFVKPANMGSSVGISKVDDLADLQPALSEAYKYDNRVVIEQGVDAREIE) coordinates ATP. Residues Asp289, Glu302, and Asn304 each coordinate Mg(2+).

It belongs to the D-alanine--D-alanine ligase family. Mg(2+) is required as a cofactor. Mn(2+) serves as cofactor.

Its subcellular location is the cytoplasm. It catalyses the reaction 2 D-alanine + ATP = D-alanyl-D-alanine + ADP + phosphate + H(+). It participates in cell wall biogenesis; peptidoglycan biosynthesis. Its function is as follows. Cell wall formation. This is D-alanine--D-alanine ligase from Lactococcus lactis subsp. lactis (strain IL1403) (Streptococcus lactis).